The sequence spans 39 residues: Cytochrome b559 subunit beta (39 aa).

The chain crosses the membrane as a helical span at residues 14–30 (WLAVHGLAVPTVFFLGS). Residue His18 coordinates heme.

The protein belongs to the PsbE/PsbF family. As to quaternary structure, heterodimer of an alpha subunit and a beta subunit. PSII is composed of 1 copy each of membrane proteins PsbA, PsbB, PsbC, PsbD, PsbE, PsbF, PsbH, PsbI, PsbJ, PsbK, PsbL, PsbM, PsbT, PsbX, PsbY, PsbZ, Psb30/Ycf12, at least 3 peripheral proteins of the oxygen-evolving complex and a large number of cofactors. It forms dimeric complexes. The cofactor is heme b.

The protein resides in the plastid. Its subcellular location is the chloroplast thylakoid membrane. This b-type cytochrome is tightly associated with the reaction center of photosystem II (PSII). PSII is a light-driven water:plastoquinone oxidoreductase that uses light energy to abstract electrons from H(2)O, generating O(2) and a proton gradient subsequently used for ATP formation. It consists of a core antenna complex that captures photons, and an electron transfer chain that converts photonic excitation into a charge separation. This is Cytochrome b559 subunit beta from Welwitschia mirabilis (Tree tumbo).